Consider the following 349-residue polypeptide: Aspartate-semialdehyde dehydrogenase (349 aa).

NADP(+) contacts are provided by residues 12–15 and 39–40; these read TGSV and NS. Arginine 113 contributes to the phosphate binding site. Cysteine 148 serves as the catalytic Acyl-thioester intermediate. Residue glutamine 175 participates in substrate binding. 178–179 contacts NADP(+); sequence SG. Glutamate 201 lines the substrate pocket. Lysine 204 is a binding site for phosphate. Residue arginine 234 coordinates substrate. Histidine 241 acts as the Proton acceptor in catalysis. Residue 326-327 participates in NADP(+) binding; it reads NT.

It belongs to the aspartate-semialdehyde dehydrogenase family. As to quaternary structure, homodimer.

The enzyme catalyses L-aspartate 4-semialdehyde + phosphate + NADP(+) = 4-phospho-L-aspartate + NADPH + H(+). The protein operates within amino-acid biosynthesis; L-lysine biosynthesis via DAP pathway; (S)-tetrahydrodipicolinate from L-aspartate: step 2/4. It participates in amino-acid biosynthesis; L-methionine biosynthesis via de novo pathway; L-homoserine from L-aspartate: step 2/3. Its pathway is amino-acid biosynthesis; L-threonine biosynthesis; L-threonine from L-aspartate: step 2/5. Catalyzes the NADPH-dependent formation of L-aspartate-semialdehyde (L-ASA) by the reductive dephosphorylation of L-aspartyl-4-phosphate. The chain is Aspartate-semialdehyde dehydrogenase from Leptospira interrogans serogroup Icterohaemorrhagiae serovar copenhageni (strain Fiocruz L1-130).